Here is a 369-residue protein sequence, read N- to C-terminus: Anhydro-N-acetylmuramic acid kinase (369 aa).

ATP is bound at residue 12-19 (GTSMDGVD).

This sequence belongs to the anhydro-N-acetylmuramic acid kinase family.

The enzyme catalyses 1,6-anhydro-N-acetyl-beta-muramate + ATP + H2O = N-acetyl-D-muramate 6-phosphate + ADP + H(+). The protein operates within amino-sugar metabolism; 1,6-anhydro-N-acetylmuramate degradation. It functions in the pathway cell wall biogenesis; peptidoglycan recycling. Functionally, catalyzes the specific phosphorylation of 1,6-anhydro-N-acetylmuramic acid (anhMurNAc) with the simultaneous cleavage of the 1,6-anhydro ring, generating MurNAc-6-P. Is required for the utilization of anhMurNAc either imported from the medium or derived from its own cell wall murein, and thus plays a role in cell wall recycling. The chain is Anhydro-N-acetylmuramic acid kinase from Shewanella pealeana (strain ATCC 700345 / ANG-SQ1).